Here is a 224-residue protein sequence, read N- to C-terminus: Deoxyribose-phosphate aldolase (224 aa).

The Proton donor/acceptor role is filled by Asp-98. Lys-159 acts as the Schiff-base intermediate with acetaldehyde in catalysis. Residue Lys-189 is the Proton donor/acceptor of the active site.

The protein belongs to the DeoC/FbaB aldolase family. DeoC type 1 subfamily.

It localises to the cytoplasm. The enzyme catalyses 2-deoxy-D-ribose 5-phosphate = D-glyceraldehyde 3-phosphate + acetaldehyde. It participates in carbohydrate degradation; 2-deoxy-D-ribose 1-phosphate degradation; D-glyceraldehyde 3-phosphate and acetaldehyde from 2-deoxy-alpha-D-ribose 1-phosphate: step 2/2. Its function is as follows. Catalyzes a reversible aldol reaction between acetaldehyde and D-glyceraldehyde 3-phosphate to generate 2-deoxy-D-ribose 5-phosphate. The sequence is that of Deoxyribose-phosphate aldolase from Methanothermobacter thermautotrophicus (strain ATCC 29096 / DSM 1053 / JCM 10044 / NBRC 100330 / Delta H) (Methanobacterium thermoautotrophicum).